The sequence spans 672 residues: UvrABC system protein B (672 aa).

Positions A26–Y181 constitute a Helicase ATP-binding domain. Residue G39 to T46 participates in ATP binding. A Beta-hairpin motif is present at residues Y92–I115. The Helicase C-terminal domain occupies Q430–V592. The UVR domain maps to A631–G666.

The protein belongs to the UvrB family. Forms a heterotetramer with UvrA during the search for lesions. Interacts with UvrC in an incision complex.

The protein resides in the cytoplasm. Its function is as follows. The UvrABC repair system catalyzes the recognition and processing of DNA lesions. A damage recognition complex composed of 2 UvrA and 2 UvrB subunits scans DNA for abnormalities. Upon binding of the UvrA(2)B(2) complex to a putative damaged site, the DNA wraps around one UvrB monomer. DNA wrap is dependent on ATP binding by UvrB and probably causes local melting of the DNA helix, facilitating insertion of UvrB beta-hairpin between the DNA strands. Then UvrB probes one DNA strand for the presence of a lesion. If a lesion is found the UvrA subunits dissociate and the UvrB-DNA preincision complex is formed. This complex is subsequently bound by UvrC and the second UvrB is released. If no lesion is found, the DNA wraps around the other UvrB subunit that will check the other stand for damage. The sequence is that of UvrABC system protein B from Coxiella burnetii (strain CbuK_Q154) (Coxiella burnetii (strain Q154)).